The following is a 1108-amino-acid chain: Retinal guanylyl cyclase 1 (1108 aa).

Positions Met-1–Ser-54 are cleaved as a signal peptide. At Ala-55–Glu-465 the chain is on the extracellular side. Cys-108 and Cys-136 are disulfide-bonded. Residue Asn-300 is glycosylated (N-linked (GlcNAc...) asparagine). A helical membrane pass occupies residues Pro-466 to Leu-490. Over Arg-491–Lys-1108 the chain is Cytoplasmic. The segment at Gly-520–Ser-552 is disordered. Residues Gly-520–Ile-811 enclose the Protein kinase domain. Positions Gly-529–Ser-552 are enriched in polar residues. The 131-residue stretch at Thr-883–Glu-1013 folds into the Guanylate cyclase domain. The tract at residues Ile-1069 to Lys-1108 is disordered.

The protein belongs to the adenylyl cyclase class-4/guanylyl cyclase family. In terms of assembly, homodimer; requires homodimerization for guanylyl cyclase activity. Interacts (via C-terminus) with RD3 (via C-terminus); promotes the exit of GUCY2E from the endoplasmic reticulum and its trafficking to the photoreceptor outer segments. Interaction with RD3 negatively regulates GUCY2E guanylate cyclase activity. Post-translationally, there are 9 conserved cysteine residues in sensory guanylate cyclases, 6 in the extracellular domain, which may be involved in intra- or interchain disulfide bonds. Expressed in retina and enriched in photoreceptor outer segments.

It is found in the membrane. It localises to the photoreceptor outer segment membrane. The protein resides in the endoplasmic reticulum membrane. It carries out the reaction GTP = 3',5'-cyclic GMP + diphosphate. Activated by GUCA1A when free calcium ions concentration is low, and inhibited by GUCA1A when free calcium ions concentration is high. Negatively regulated by RD3; inhibits the basal and GUCA1A-stimulated guanylate cyclase activity. Catalyzes the synthesis of cyclic GMP (cGMP) in rods and cones of photoreceptors. Plays an essential role in phototransduction, by mediating cGMP replenishment. May also participate in the trafficking of membrane-asociated proteins to the photoreceptor outer segment membrane. This chain is Retinal guanylyl cyclase 1 (Gucy2e), found in Rattus norvegicus (Rat).